The primary structure comprises 575 residues: TOX high mobility group box family member 3 (575 aa).

2 disordered regions span residues leucine 189–valine 258 and glutamine 516–phenylalanine 575. The span at serine 195–serine 214 shows a compositional bias: low complexity. The span at aspartate 222 to lysine 238 shows a compositional bias: basic and acidic residues. The span at lysine 239–lysine 249 shows a compositional bias: basic residues. The segment at residues proline 254–arginine 322 is a DNA-binding region (HMG box). Positions glutamine 516–glutamine 526 are enriched in low complexity. Over residues proline 527 to serine 541 the composition is skewed to polar residues. Residues serine 548 to phenylalanine 575 are compositionally biased toward low complexity.

Homodimer. Interacts (via HGM box) with CITED1 (via C-terminus); the interaction increases estrogen-response element (ERE)-dependent transcription and protection against cell death. Interacts with CREB1 (phosphorylated form). Interacts with CREB1; the interaction is not depolarization dependent. Interacts with CREBBP (via C-terminus).

It localises to the nucleus. Transcriptional coactivator of the p300/CBP-mediated transcription complex. Activates transactivation through cAMP response element (CRE) sites. Protects against cell death by inducing antiapoptotic and repressing pro-apoptotic transcripts. Stimulates transcription from the estrogen-responsive or BCL-2 promoters. Required for depolarization-induced transcription activation of the C-FOS promoter in neurons. Associates with chromatin to the estrogen-responsive C3 promoter region. The protein is TOX high mobility group box family member 3 (Tox3) of Mus musculus (Mouse).